A 340-amino-acid polypeptide reads, in one-letter code: Tetraacyldisaccharide 4'-kinase (340 aa).

47–54 (SVGGTGKT) lines the ATP pocket.

It belongs to the LpxK family.

It catalyses the reaction a lipid A disaccharide + ATP = a lipid IVA + ADP + H(+). It participates in glycolipid biosynthesis; lipid IV(A) biosynthesis; lipid IV(A) from (3R)-3-hydroxytetradecanoyl-[acyl-carrier-protein] and UDP-N-acetyl-alpha-D-glucosamine: step 6/6. Transfers the gamma-phosphate of ATP to the 4'-position of a tetraacyldisaccharide 1-phosphate intermediate (termed DS-1-P) to form tetraacyldisaccharide 1,4'-bis-phosphate (lipid IVA). The sequence is that of Tetraacyldisaccharide 4'-kinase from Flavobacterium johnsoniae (strain ATCC 17061 / DSM 2064 / JCM 8514 / BCRC 14874 / CCUG 350202 / NBRC 14942 / NCIMB 11054 / UW101) (Cytophaga johnsonae).